We begin with the raw amino-acid sequence, 420 residues long: Putative RNA-binding protein Alsin2 (420 aa).

Residues 99 to 130 adopt a coiled-coil conformation; sequence IADCDRRTDSAKQRLKETQEELTAEVAEKANA. Basic and acidic residues-rich tracts occupy residues 242–259, 282–363, and 373–399; these read AELKRTGKMTDREDEGRG, RERQ…RFGD, and HHRDDRRRSRSRERSPRERRNFNHFRD. Residues 242–420 form a disordered region; the sequence is AELKRTGKMT…SYSRERNYRR (179 aa).

Belongs to the Luc7 family. Interacts with x16 (via Arg/Ser-rich region).

Its function is as follows. May bind to RNA via its Arg/Ser-rich domain. The protein is Putative RNA-binding protein Alsin2 of Drosophila melanogaster (Fruit fly).